The chain runs to 118 residues: Sarafotoxin-i1 (118 aa).

Positions 1 to 23 (MALLPRLAAGGLLLLLALAALDG) are cleaved as a signal peptide. A propeptide spanning residues 24-84 (KPAPPKLLQK…LSPLRKPQPL (61 aa)) is cleaved from the precursor. Intrachain disulfides connect cysteine 85/cysteine 99 and cysteine 87/cysteine 95. The propeptide occupies 112–118 (PSPIQSS).

Belongs to the endothelin/sarafotoxin family. Different length molecules ranging from 15 (85-99) to 30 amino acids (85-114) have been found in the venom. As to expression, expressed by the venom gland.

It is found in the secreted. Vasoconstrictor activity. These toxins cause cardiac arrest probably as a result of coronary vasospasm. Functionally, sarafotoxin-i3: vasoconstrictor activity. Causes cardiac arrest probably as a result of coronary vasospasm. Displays low agonistic activities towards endothelin-2 receptor (EDNRB) (displays affinity in the micromolar range). This chain is Sarafotoxin-i1, found in Atractaspis irregularis (Variable burrowing asp).